We begin with the raw amino-acid sequence, 129 residues long: 3-aminoacrylate deaminase RutC (129 aa).

Belongs to the RutC family.

The enzyme catalyses (Z)-3-aminoacrylate + H2O + H(+) = 3-oxopropanoate + NH4(+). Functionally, involved in pyrimidine catabolism. Catalyzes the deamination of 3-aminoacrylate to malonic semialdehyde, a reaction that can also occur spontaneously. RutC may facilitate the reaction and modulate the metabolic fitness, rather than catalyzing essential functions. The polypeptide is 3-aminoacrylate deaminase RutC (Caulobacter vibrioides (strain ATCC 19089 / CIP 103742 / CB 15) (Caulobacter crescentus)).